A 360-amino-acid polypeptide reads, in one-letter code: N5-carboxyaminoimidazole ribonucleotide synthase (360 aa).

ATP is bound by residues Arg-98, Lys-138, 143 to 149 (GYDGKGQ), 173 to 176 (EGFV), Glu-181, His-204, and 255 to 256 (NE). The ATP-grasp domain occupies 102 to 285 (KSMFKDLGIP…QFENHLRAVA (184 aa)).

Belongs to the PurK/PurT family. In terms of assembly, homodimer.

It catalyses the reaction 5-amino-1-(5-phospho-beta-D-ribosyl)imidazole + hydrogencarbonate + ATP = 5-carboxyamino-1-(5-phospho-D-ribosyl)imidazole + ADP + phosphate + 2 H(+). It participates in purine metabolism; IMP biosynthesis via de novo pathway; 5-amino-1-(5-phospho-D-ribosyl)imidazole-4-carboxylate from 5-amino-1-(5-phospho-D-ribosyl)imidazole (N5-CAIR route): step 1/2. Its function is as follows. Catalyzes the ATP-dependent conversion of 5-aminoimidazole ribonucleotide (AIR) and HCO(3)(-) to N5-carboxyaminoimidazole ribonucleotide (N5-CAIR). The polypeptide is N5-carboxyaminoimidazole ribonucleotide synthase (Pseudomonas aeruginosa (strain ATCC 15692 / DSM 22644 / CIP 104116 / JCM 14847 / LMG 12228 / 1C / PRS 101 / PAO1)).